The chain runs to 219 residues: Formate dehydrogenase 2 subunit beta (cytochrome c-553) (219 aa).

In terms of domain architecture, 4Fe-4S ferredoxin-type 1 spans 3–32 (KAFLIDTTRCTACRGCQLACKEWHDLPANV). Positions 12, 15, 18, 22, 74, 77, 82, 124, 141, 144, 156, and 160 each coordinate [4Fe-4S] cluster. One can recognise a 4Fe-4S ferredoxin-type 2 domain in the interval 132-171 (DPKTKRITKCDMCFDRVSAGMQPICVKTCPTGTMAFGERD).

In terms of assembly, heterotrimer of cytochrome c3 FDH2C and formate dehydrogenase FDH2 alpha and beta subunits that forms the FdhABC(3) complex. [4Fe-4S] cluster serves as cofactor.

It is found in the periplasm. Its function is as follows. Beta chain of the formate dehydrogenase (FDH) that catalyzes the reversible two-electron oxidation of formate to carbon dioxide. The beta chain is an electron transfer unit. The protein is Formate dehydrogenase 2 subunit beta (cytochrome c-553) of Nitratidesulfovibrio vulgaris (strain ATCC 29579 / DSM 644 / CCUG 34227 / NCIMB 8303 / VKM B-1760 / Hildenborough) (Desulfovibrio vulgaris).